We begin with the raw amino-acid sequence, 306 residues long: tRNA dimethylallyltransferase (306 aa).

ATP is bound at residue 12–19 (GPTGVGKS). 14-19 (TGVGKS) lines the substrate pocket.

It belongs to the IPP transferase family. In terms of assembly, monomer. Requires Mg(2+) as cofactor.

It carries out the reaction adenosine(37) in tRNA + dimethylallyl diphosphate = N(6)-dimethylallyladenosine(37) in tRNA + diphosphate. Catalyzes the transfer of a dimethylallyl group onto the adenine at position 37 in tRNAs that read codons beginning with uridine, leading to the formation of N6-(dimethylallyl)adenosine (i(6)A). The protein is tRNA dimethylallyltransferase of Desulfatibacillum aliphaticivorans.